Consider the following 371-residue polypeptide: Deoxyguanosinetriphosphate triphosphohydrolase-like protein (371 aa).

Positions 62–200 (RITHSIEVAQ…SAISDDIAYN (139 aa)) constitute an HD domain.

This sequence belongs to the dGTPase family. Type 2 subfamily.

In Pelagibacter ubique (strain HTCC1062), this protein is Deoxyguanosinetriphosphate triphosphohydrolase-like protein.